A 123-amino-acid polypeptide reads, in one-letter code: Large ribosomal subunit protein bL12 (123 aa).

This sequence belongs to the bacterial ribosomal protein bL12 family. Homodimer. Part of the ribosomal stalk of the 50S ribosomal subunit. Forms a multimeric L10(L12)X complex, where L10 forms an elongated spine to which 2 to 4 L12 dimers bind in a sequential fashion. Binds GTP-bound translation factors.

In terms of biological role, forms part of the ribosomal stalk which helps the ribosome interact with GTP-bound translation factors. Is thus essential for accurate translation. In Finegoldia magna (strain ATCC 29328 / DSM 20472 / WAL 2508) (Peptostreptococcus magnus), this protein is Large ribosomal subunit protein bL12.